Here is a 446-residue protein sequence, read N- to C-terminus: Histidine--tRNA ligase (446 aa).

Belongs to the class-II aminoacyl-tRNA synthetase family. Homodimer.

It is found in the cytoplasm. It catalyses the reaction tRNA(His) + L-histidine + ATP = L-histidyl-tRNA(His) + AMP + diphosphate + H(+). The polypeptide is Histidine--tRNA ligase (Burkholderia lata (strain ATCC 17760 / DSM 23089 / LMG 22485 / NCIMB 9086 / R18194 / 383)).